The primary structure comprises 223 residues: MTIAKMIDHTALKPDTTKEQILTLTKEAREYGFASVCVNPTWVKLSAEQLAGAESVVCTVIGFPLGANTPEVKAFEVKDAIQNGAKEVDMVINIGALKDKDDELVERDIRAVVDAAKGKALVKVIIETCLLTDEEKVRACEIAVKAGTDFVKTSTGFSTGGATAEDIALMRKTVGPNIGVKASGGVRTKEDVEKMIEAGATRIGASAGVAIVSGEKPAKPDNY.

The active-site Proton donor/acceptor is Asp89. Lys152 (schiff-base intermediate with acetaldehyde) is an active-site residue. Lys181 acts as the Proton donor/acceptor in catalysis.

This sequence belongs to the DeoC/FbaB aldolase family. DeoC type 1 subfamily.

It is found in the cytoplasm. It carries out the reaction 2-deoxy-D-ribose 5-phosphate = D-glyceraldehyde 3-phosphate + acetaldehyde. It functions in the pathway carbohydrate degradation; 2-deoxy-D-ribose 1-phosphate degradation; D-glyceraldehyde 3-phosphate and acetaldehyde from 2-deoxy-alpha-D-ribose 1-phosphate: step 2/2. Catalyzes a reversible aldol reaction between acetaldehyde and D-glyceraldehyde 3-phosphate to generate 2-deoxy-D-ribose 5-phosphate. This chain is Deoxyribose-phosphate aldolase, found in Listeria monocytogenes serotype 4b (strain CLIP80459).